The following is a 369-amino-acid chain: MSTKELREGFTTGACSAAAAKAATRLLLKGEPVLEIETTLPNDRQVLFPVKRCQLEGEVAICSVVKDAGDDPDCTHGAELTARVRLTKESKIVLKGGDGVATVTKTGLGIEVGEPAINPIPRKNISEMILEELKGSSFNGAEVEISVPGGQEMAKKTMNKRLGLIGGISIIGTTGIVKPFSTAAFKASVIQAIRMAREYEVDTVILTTGGKSEKFAMNLFPNLKELSFIQAGDFIGTGIKTSVKEFIRHVIVVGMIGKLSKMADGVMMTHRGGSSVNTKMLSDIARSVGIPEPIAIDIQNANTARHALEICKENGYEIITTKICEIVARNCSKHAGTNMSISCYMVDFDGTLLGKFENFSQKSKLRKGI.

The protein belongs to the CbiD family.

The enzyme catalyses Co-precorrin-5B + S-adenosyl-L-methionine = Co-precorrin-6A + S-adenosyl-L-homocysteine. It participates in cofactor biosynthesis; adenosylcobalamin biosynthesis; cob(II)yrinate a,c-diamide from sirohydrochlorin (anaerobic route): step 6/10. Catalyzes the methylation of C-1 in cobalt-precorrin-5B to form cobalt-precorrin-6A. This is Cobalt-precorrin-5B C(1)-methyltransferase from Leptospira borgpetersenii serovar Hardjo-bovis (strain JB197).